The following is a 534-amino-acid chain: Sodium-dependent lysophosphatidylcholine symporter 1 (534 aa).

Topologically, residues 1 to 39 (MAKGEGAESGSAAGLLPTSILQASERPVQVKKEPKKKQQ) are cytoplasmic. Residues 40–69 (LSICNKLCYAVGGAPYQLTGCALGFFLQIY) form a helical membrane-spanning segment. Topologically, residues 70-80 (LLDVAKVEPLP) are extracellular. Residues 81-101 (ASIILFVGRAWDAFTDPLVGF) form a helical membrane-spanning segment. Residues 102-113 (CISKSSWTRLGR) are Cytoplasmic-facing. The helical transmembrane segment at 114-133 (LMPWIIFSTPLAIIAYFLIW) threads the bilayer. Over 134–148 (FVPDFPSGTESSHGF) the chain is Extracellular. A helical transmembrane segment spans residues 149 to 173 (LWYLLFYCLFETLVTCFHVPYSALT). Topologically, residues 174-180 (MFISTEQ) are cytoplasmic. Residues 181-212 (SERDSATAYRMTVEVLGTVIGTAIQGQIVGQA) traverse the membrane as a helical segment. Topologically, residues 213–232 (KAPCLQDQNGSVVVSEVANR) are extracellular. The cysteines at positions 216 and 464 are disulfide-linked. N-linked (GlcNAc...) asparagine glycans are attached at residues Asn-221 and Asn-231. The helical transmembrane segment at 233–266 (TQSTASLKDTQNAYLLAAGIIASIYVLCAFILIL) threads the bilayer. The Cytoplasmic portion of the chain corresponds to 267–297 (GVREQRELYESQQAESMPFFQGLRLVMGHGP). A helical membrane pass occupies residues 298-324 (YVKLIAGFLFTSLAFMLVEGNFALFCT). Over 325–335 (YTLDFRNEFQN) the chain is Extracellular. The helical transmembrane segment at 336–354 (LLLAIMLSATFTIPIWQWF) threads the bilayer. Residues 355-358 (LTRF) are Cytoplasmic-facing. A helical membrane pass occupies residues 359–380 (GKKTAVYIGISSAVPFLILVAL). The Extracellular segment spans residues 381-383 (MER). The helical transmembrane segment at 384–420 (NLIVTYVVAVAAGVSVAAAFLLPWSMLPDVIDDFHLK) threads the bilayer. The Cytoplasmic portion of the chain corresponds to 421–430 (HPHSPGTEPI). A helical transmembrane segment spans residues 431 to 457 (FFSFYVFFTKFASGVSLGVSTLSLDFA). The Extracellular portion of the chain corresponds to 458-469 (NYQRQGCSQPEQ). The helical transmembrane segment at 470-493 (VKFTLKMLVTMAPIILILLGLLLF) threads the bilayer. The Cytoplasmic segment spans residues 494 to 534 (KLYPIDEEKRRQNKKALQALREEASSSGCSDTDSTELASIL).

It belongs to the major facilitator superfamily. In terms of processing, N-glycosylated. As to expression, widely expressed. Exhibits an oscillatory pattern of expression in brown adipose tissue and liver consistent with a circadian rhythm. Enriched in brain micro-vessels, where it is specifically present in endothelium constituting the blood-brain barrier (at protein level).

The protein localises to the cell membrane. It localises to the endoplasmic reticulum membrane. The catalysed reaction is a 1-acyl-sn-glycero-3-phosphocholine(in) + Na(+)(in) = a 1-acyl-sn-glycero-3-phosphocholine(out) + Na(+)(out). It catalyses the reaction 1-(4Z,7Z,10Z,13Z,16Z,19Z-docosahexaenoyl)-sn-glycero-3-phosphocholine(in) + Na(+)(in) = 1-(4Z,7Z,10Z,13Z,16Z,19Z-docosahexaenoyl)-sn-glycero-3-phosphocholine(out) + Na(+)(out). It carries out the reaction 1-(9Z-octadecenoyl)-sn-glycero-3-phosphocholine(in) + Na(+)(in) = 1-(9Z-octadecenoyl)-sn-glycero-3-phosphocholine(out) + Na(+)(out). The enzyme catalyses 1-hexadecanoyl-sn-glycero-3-phosphocholine(in) + Na(+)(in) = 1-hexadecanoyl-sn-glycero-3-phosphocholine(out) + Na(+)(out). The catalysed reaction is a 1-acyl-sn-glycero-3-phosphoethanolamine(in) + Na(+)(in) = a 1-acyl-sn-glycero-3-phosphoethanolamine(out) + Na(+)(out). Functionally, sodium-dependent lysophosphatidylcholine (LPC) symporter, which plays an essential role for blood-brain barrier formation and function. Specifically expressed in endothelium of the blood-brain barrier of micro-vessels and transports LPC into the brain. Transport of LPC is essential because it constitutes the major mechanism by which docosahexaenoic acid (DHA), an omega-3 fatty acid that is essential for normal brain growth and cognitive function, enters the brain. Transports LPC carrying long-chain fatty acids such LPC oleate and LPC palmitate with a minimum acyl chain length of 14 carbons. Does not transport docosahexaenoic acid in unesterified fatty acid. Not required for central nervous system vascular morphogenesis. The polypeptide is Sodium-dependent lysophosphatidylcholine symporter 1 (Mus musculus (Mouse)).